The sequence spans 379 residues: F-box protein At1g30200 (379 aa).

An F-box domain is found at 24 to 72 (DHFDLLPDSLLLLIFDKVADVKDLGRCCIVSRRFHSLVPFVENVLVRVD).

This is F-box protein At1g30200 from Arabidopsis thaliana (Mouse-ear cress).